We begin with the raw amino-acid sequence, 359 residues long: Putative B3 domain-containing protein At3g24850 (359 aa).

Disordered stretches follow at residues 92 to 111 (DSEI…LQNS) and 159 to 192 (EKME…KRTG). The span at 100–111 (TSDSQMKTLQNS) shows a compositional bias: polar residues. Residues 250 to 351 (FNNLLQNDFL…VLCFAMEQSS (102 aa)) constitute a DNA-binding region (TF-B3).

The protein resides in the nucleus. This is Putative B3 domain-containing protein At3g24850 from Arabidopsis thaliana (Mouse-ear cress).